A 475-amino-acid polypeptide reads, in one-letter code: Cysteine--tRNA ligase (475 aa).

A Zn(2+)-binding site is contributed by cysteine 28. The 'HIGH' region signature appears at 30–40 (PTVYDYAHIGN). Zn(2+)-binding residues include cysteine 213, histidine 238, and glutamate 242. Positions 270–274 (KMSKS) match the 'KMSKS' region motif. Lysine 273 serves as a coordination point for ATP.

It belongs to the class-I aminoacyl-tRNA synthetase family. As to quaternary structure, monomer. Zn(2+) is required as a cofactor.

Its subcellular location is the cytoplasm. It carries out the reaction tRNA(Cys) + L-cysteine + ATP = L-cysteinyl-tRNA(Cys) + AMP + diphosphate. The protein is Cysteine--tRNA ligase (cysS) of Chlamydia muridarum (strain MoPn / Nigg).